The following is a 644-amino-acid chain: Arginine--tRNA ligase (644 aa).

The short motif at 134-144 (VNPTKPLHMGH) is the 'HIGH' region element.

Belongs to the class-I aminoacyl-tRNA synthetase family.

The protein localises to the cytoplasm. The enzyme catalyses tRNA(Arg) + L-arginine + ATP = L-arginyl-tRNA(Arg) + AMP + diphosphate. The protein is Arginine--tRNA ligase of Thermococcus sibiricus (strain DSM 12597 / MM 739).